We begin with the raw amino-acid sequence, 292 residues long: 4-hydroxy-tetrahydrodipicolinate synthase (292 aa).

Position 45 (threonine 45) interacts with pyruvate. Catalysis depends on tyrosine 133, which acts as the Proton donor/acceptor. Residue lysine 161 is the Schiff-base intermediate with substrate of the active site. Position 203 (isoleucine 203) interacts with pyruvate.

Belongs to the DapA family. As to quaternary structure, homotetramer; dimer of dimers.

The protein localises to the cytoplasm. It catalyses the reaction L-aspartate 4-semialdehyde + pyruvate = (2S,4S)-4-hydroxy-2,3,4,5-tetrahydrodipicolinate + H2O + H(+). Its pathway is amino-acid biosynthesis; L-lysine biosynthesis via DAP pathway; (S)-tetrahydrodipicolinate from L-aspartate: step 3/4. Its function is as follows. Catalyzes the condensation of (S)-aspartate-beta-semialdehyde [(S)-ASA] and pyruvate to 4-hydroxy-tetrahydrodipicolinate (HTPA). This Vibrio cholerae serotype O1 (strain M66-2) protein is 4-hydroxy-tetrahydrodipicolinate synthase.